An 84-amino-acid polypeptide reads, in one-letter code: Delta-thalatoxin-Tas1a (84 aa).

A signal peptide spans 1–19; sequence MAYLKIVLVALMLVLAVSA. Residues 20–33 constitute a propeptide that is removed on maturation; that stretch reads MRRPDQQDQDISVA. 3 disulfide bridges follow: Cys38-Cys78, Cys40-Cys68, and Cys61-Cys79.

It belongs to the sea anemone sodium channel inhibitory toxin family. Type II subfamily.

The protein localises to the secreted. It localises to the nematocyst. Binds specifically to the voltage-gated sodium channel (Nav) and delays its inactivation. The protein is Delta-thalatoxin-Tas1a of Thalassianthus aster (Fuzzy-tipped anemone).